The following is a 310-amino-acid chain: Collagen-like protein V6 (310 aa).

Over residues 1–41 (MSLSTLFSPNTYNINSKSQTLNNLPSNPTSQTNTLWSNNAY) the composition is skewed to polar residues. The disordered stretch occupies residues 1-183 (MSLSTLFSPN…GDPGAKGDPG (183 aa)). Collagen-like domains are found at residues 61–119 (GQKG…KGQA) and 123–182 (GLKG…KGDP). Residues 92-101 (SGDKGDKGDS) show a composition bias toward basic and acidic residues. N-linked (GlcNAc...) asparagine; by host glycosylation is found at N227 and N264.

Belongs to the sputnik virus V6 family.

The sequence is that of Collagen-like protein V6 from Sputnik virophage.